A 141-amino-acid polypeptide reads, in one-letter code: MPRTTKRLLDKLREVEALRGDGRSPPRGMLSRFGKGMVAFLREYVRILAYHLSVGPFPRLSKIIAAVGLAVSGPGVLYKVIEAIIAGEVRNRGAVIATAKEEPFEFYTMTLIVGSGAAFVTALGVAAFLVLILKGRPSRSE.

Helical transmembrane passes span 64-84 (IAAV…IEAI) and 112-132 (IVGS…LVLI).

Its subcellular location is the cell membrane. This is an uncharacterized protein from Sinorhizobium fredii (strain NBRC 101917 / NGR234).